The primary structure comprises 467 residues: L-seryl-tRNA(Sec) selenium transferase (467 aa).

An N6-(pyridoxal phosphate)lysine modification is found at lysine 298.

Belongs to the SelA family. The cofactor is pyridoxal 5'-phosphate.

Its subcellular location is the cytoplasm. It carries out the reaction L-seryl-tRNA(Sec) + selenophosphate + H(+) = L-selenocysteinyl-tRNA(Sec) + phosphate. The protein operates within aminoacyl-tRNA biosynthesis; selenocysteinyl-tRNA(Sec) biosynthesis; selenocysteinyl-tRNA(Sec) from L-seryl-tRNA(Sec) (bacterial route): step 1/1. In terms of biological role, converts seryl-tRNA(Sec) to selenocysteinyl-tRNA(Sec) required for selenoprotein biosynthesis. The sequence is that of L-seryl-tRNA(Sec) selenium transferase from Alkaliphilus oremlandii (strain OhILAs) (Clostridium oremlandii (strain OhILAs)).